Consider the following 23-residue polypeptide: IIGDEINGAITTADNIAGKIGII.

Expressed in skin glands.

The protein resides in the secreted. Functionally, may act as an antimicrobial peptide. The protein is Septenin 2b of Osteopilus septentrionalis (Cuban treefrog).